The primary structure comprises 246 residues: Uridylate kinase (246 aa).

Position 18 to 21 (18 to 21 (KLSG)) interacts with ATP. UMP is bound at residue Gly-60. Residues Gly-61 and Arg-65 each coordinate ATP. Residues Asp-80 and 141–148 (TGNPFFTT) contribute to the UMP site. Positions 168, 174, and 177 each coordinate ATP.

Belongs to the UMP kinase family. In terms of assembly, homohexamer.

The protein localises to the cytoplasm. It catalyses the reaction UMP + ATP = UDP + ADP. It functions in the pathway pyrimidine metabolism; CTP biosynthesis via de novo pathway; UDP from UMP (UMPK route): step 1/1. Inhibited by UTP. Functionally, catalyzes the reversible phosphorylation of UMP to UDP. The polypeptide is Uridylate kinase (Pseudomonas syringae pv. syringae (strain B728a)).